The chain runs to 469 residues: E3 ubiquitin-protein ligase TRIM21 (469 aa).

The RING-type zinc finger occupies 16–55 (CSICLDPMVEPMSIECGHSFCQECISEVGKEGGSVCPVCR). The B box-type zinc finger occupies 87-128 (PHGELCVVHREKIHLFCEEDGKALCWVCSQSQKHRDHPMVPI). Residues cysteine 92, histidine 95, cysteine 114, and histidine 120 each coordinate Zn(2+). Positions 128 to 245 (IEEAAQEYQE…RRGSALELLQ (118 aa)) form a coiled coil. Serine 266 is subject to Phosphoserine. In terms of domain architecture, B30.2/SPRY spans 268 to 467 (DLRNVFYVPG…APLILCPLKT (200 aa)).

Belongs to the TRIM/RBCC family. As to quaternary structure, homotrimer. Interacts (via C-terminus) with IRF8 (via C-terminus). Component of a SCF(SKP2)-like complex containing CUL1, SKP1, TRIM21 and SKP2. Interacts with CALR, CUL1, FBXW11, HSPA5, IKBKB, IRF3, SKP1 and VCP. Interacts with SKP2; the interaction with SKP2 does not depend on an intact F-box domain. Interacts (via N-terminus and C-terminus) with DCP2 (via N-terminus and C-terminus). Interacts with ULK1, BECN1 and with ATG8 family members, including GABARAP, GABARAPL1, GABARAPL2 and MAP1LC3C/LC3C. Interacts with TRIM21 and SQSTM1/sequestosome 1. Interacts with IRF3. Interacts (via the SPRY domain) with NMI (via coiled-coil domain); the interaction promotes 'Lys-63'-linked ubiquitination of NMI. Interacts with IFI35 and NMI; the interaction facilitates NMI-IFI35 complex formation. In terms of processing, autoubiquitinated; does not lead to its proteasomal degradation. Deubiquitinated by USP4; leading to its stabilization.

Its subcellular location is the cytoplasm. The protein localises to the cytoplasmic vesicle. It is found in the autophagosome. The protein resides in the nucleus. It localises to the P-body. Its subcellular location is the stress granule. It catalyses the reaction S-ubiquitinyl-[E2 ubiquitin-conjugating enzyme]-L-cysteine + [acceptor protein]-L-lysine = [E2 ubiquitin-conjugating enzyme]-L-cysteine + N(6)-ubiquitinyl-[acceptor protein]-L-lysine.. It participates in protein modification; protein ubiquitination. Its function is as follows. E3 ubiquitin-protein ligase whose activity is dependent on E2 enzymes, UBE2D1, UBE2D2, UBE2E1 and UBE2E2. Forms a ubiquitin ligase complex in cooperation with the E2 UBE2D2 that is used not only for the ubiquitination of USP4 and IKBKB but also for its self-ubiquitination. Component of cullin-RING-based SCF (SKP1-CUL1-F-box protein) E3 ubiquitin-protein ligase complexes such as SCF(SKP2)-like complexes. A TRIM21-containing SCF(SKP2)-like complex is shown to mediate ubiquitination of CDKN1B ('Thr-187' phosphorylated-form), thereby promoting its degradation by the proteasome. Monoubiquitinates IKBKB that will negatively regulates Tax-induced NF-kappa-B signaling. Negatively regulates IFN-beta production post-pathogen recognition by catalyzing polyubiquitin-mediated degradation of IRF3. Mediates the ubiquitin-mediated proteasomal degradation of IgG1 heavy chain, which is linked to the VCP-mediated ER-associated degradation (ERAD) pathway. Promotes IRF8 ubiquitination, which enhanced the ability of IRF8 to stimulate cytokine genes transcription in macrophages. Plays a role in the regulation of the cell cycle progression. Enhances the decapping activity of DCP2. Exists as a ribonucleoprotein particle present in all mammalian cells studied and composed of a single polypeptide and one of four small RNA molecules. At least two isoforms are present in nucleated and red blood cells, and tissue specific differences in RO/SSA proteins have been identified. The common feature of these proteins is their ability to bind HY RNAs.2. Involved in the regulation of innate immunity and the inflammatory response in response to IFNG/IFN-gamma. Organizes autophagic machinery by serving as a platform for the assembly of ULK1, Beclin 1/BECN1 and ATG8 family members and recognizes specific autophagy targets, thus coordinating target recognition with assembly of the autophagic apparatus and initiation of autophagy. Also regulates autophagy through FIP200/RB1CC1 ubiquitination and subsequent decreased protein stability. Represses the innate antiviral response by facilitating the formation of the NMI-IFI35 complex through 'Lys-63'-linked ubiquitination of NMI. During viral infection, promotes cell pyroptosis by mediating 'Lys-6'-linked ubiquitination of ISG12a/IFI27, facilitating its translocation into the mitochondria and subsequent CASP3 activation. When up-regulated through the IFN/JAK/STAT signaling pathway, promotes 'Lys-27'-linked ubiquitination of MAVS, leading to the recruitment of TBK1 and up-regulation of innate immunity. Mediates 'Lys-63'-linked polyubiquitination of G3BP1 in response to heat shock, leading to stress granule disassembly. This is E3 ubiquitin-protein ligase TRIM21 (TRIM21) from Bos taurus (Bovine).